A 362-amino-acid polypeptide reads, in one-letter code: S-adenosylmethionine:tRNA ribosyltransferase-isomerase (362 aa).

Belongs to the QueA family. In terms of assembly, monomer.

The protein localises to the cytoplasm. The catalysed reaction is 7-aminomethyl-7-carbaguanosine(34) in tRNA + S-adenosyl-L-methionine = epoxyqueuosine(34) in tRNA + adenine + L-methionine + 2 H(+). The protein operates within tRNA modification; tRNA-queuosine biosynthesis. Functionally, transfers and isomerizes the ribose moiety from AdoMet to the 7-aminomethyl group of 7-deazaguanine (preQ1-tRNA) to give epoxyqueuosine (oQ-tRNA). This chain is S-adenosylmethionine:tRNA ribosyltransferase-isomerase, found in Syntrophus aciditrophicus (strain SB).